Here is a 390-residue protein sequence, read N- to C-terminus: Isotocin receptor (390 aa).

Residues 1–48 lie on the Extracellular side of the membrane; that stretch reads MEEMFKEQDFWSFNESSRNSTVGNETFGGNQTVNPLKRNEEVAKVEVT. N-linked (GlcNAc...) asparagine glycans are attached at residues Asn-14, Asn-19, Asn-24, and Asn-30. The helical transmembrane segment at 49 to 69 threads the bilayer; it reads VLALVLFLALAGNLCVLIAIY. Topologically, residues 70–86 are cytoplasmic; the sequence is TAKHTQSRMYYLMKHLS. A helical transmembrane segment spans residues 87 to 107; the sequence is IADLVVAVFQVLPQLIWDITF. The Extracellular portion of the chain corresponds to 108–124; that stretch reads RFYGPDFLCRLVKYLQT. The cysteines at positions 116 and 191 are disulfide-linked. Residues 125–145 traverse the membrane as a helical segment; that stretch reads VGMFASTYMLVLMSIDRCIAI. Over 146 to 160 the chain is Cytoplasmic; sequence CQPLRSLHKRKDRCY. A helical membrane pass occupies residues 161–181; sequence VIVSWALSLVFSVPQVYIFSL. Residues 182–206 are Extracellular-facing; it reads REIGNGVYDCWGDFVQPWGAKAYIT. The chain crosses the membrane as a helical span at residues 207–227; that stretch reads WISLTIYIIPVAILGGCYGLI. At 228-276 the chain is on the cytoplasmic side; sequence SFKIWQNFKRKTKKDQCITLTTAASKANALARVSSVKLVSKAKITTVKM. Residues 277-297 traverse the membrane as a helical segment; it reads TFVIVLAYIVCWTPFFFVQMW. Topologically, residues 298–311 are extracellular; it reads SAWDPEAPREAMPF. Residues 312–332 form a helical membrane-spanning segment; that stretch reads IISMLLASLNSCCNPWIYMFF. Residues 333–390 lie on the Cytoplasmic side of the membrane; sequence AGHLFHDLKQSLLCCSTLYLKSSQCRCDQEHDSRKSNCSTYVIKSTSSQRSITQSSIT.

The protein belongs to the G-protein coupled receptor 1 family. Vasopressin/oxytocin receptor subfamily. As to expression, expressed in brain, intestine, bladder, skeletal muscle, lateral line, gills and kidney.

The protein resides in the cell membrane. Binds to isotocin. Can also be activated by vasotocin, mesotocin, oxytocin and Arg-vasopressin, although these have lower potencies than isotocin. Produces an induction of membrane chloride currents indicating that it is coupled to the inositol phosphate/calcium pathway. The sequence is that of Isotocin receptor from Catostomus commersonii (White sucker).